The following is a 117-amino-acid chain: Large ribosomal subunit protein bL20c (117 aa).

It belongs to the bacterial ribosomal protein bL20 family.

Its subcellular location is the plastid. It is found in the chloroplast. Binds directly to 23S ribosomal RNA and is necessary for the in vitro assembly process of the 50S ribosomal subunit. It is not involved in the protein synthesizing functions of that subunit. The chain is Large ribosomal subunit protein bL20c from Calycanthus floridus var. glaucus (Eastern sweetshrub).